We begin with the raw amino-acid sequence, 218 residues long: Probable transaldolase (218 aa).

Lys83 (schiff-base intermediate with substrate) is an active-site residue.

This sequence belongs to the transaldolase family. Type 3B subfamily.

The protein localises to the cytoplasm. The catalysed reaction is D-sedoheptulose 7-phosphate + D-glyceraldehyde 3-phosphate = D-erythrose 4-phosphate + beta-D-fructose 6-phosphate. The protein operates within carbohydrate degradation; pentose phosphate pathway; D-glyceraldehyde 3-phosphate and beta-D-fructose 6-phosphate from D-ribose 5-phosphate and D-xylulose 5-phosphate (non-oxidative stage): step 2/3. Transaldolase is important for the balance of metabolites in the pentose-phosphate pathway. The polypeptide is Probable transaldolase (Kosmotoga olearia (strain ATCC BAA-1733 / DSM 21960 / TBF 19.5.1)).